We begin with the raw amino-acid sequence, 329 residues long: tRNA uridine(34) hydroxylase (329 aa).

Residues 123–217 enclose the Rhodanese domain; the sequence is SDPDVILVDT…YLEEVPEEES (95 aa). The active-site Cysteine persulfide intermediate is cysteine 177. The disordered stretch occupies residues 285–329; that stretch reads REKQVQLSNARGETHVGGDAAHLIDQRKKEKLAHKEQQRSGKKAK. Positions 296–323 are enriched in basic and acidic residues; the sequence is GETHVGGDAAHLIDQRKKEKLAHKEQQR.

Belongs to the TrhO family.

It catalyses the reaction uridine(34) in tRNA + AH2 + O2 = 5-hydroxyuridine(34) in tRNA + A + H2O. Its function is as follows. Catalyzes oxygen-dependent 5-hydroxyuridine (ho5U) modification at position 34 in tRNAs. The polypeptide is tRNA uridine(34) hydroxylase (Vibrio atlanticus (strain LGP32) (Vibrio splendidus (strain Mel32))).